The chain runs to 527 residues: MADSRDPASDQMQHWKEQRAAQKADVLTTGAGNPVGDKLNVITVGPRGPLLVQDVVFTDEMAHFDRERIPERVVHAKGAGAFGYFEVTHDITKYSKAKVFEHIGKKTPIAVRFSTVAGESGSADTVRDPRGFAVKFYTEDGNWDLVGNNTPIFFIRDPILFPSFIHSQKRNPQTHLKDPDMVWDFWSLRPESLHQVSFLFSDRGIPDGHRHMNGYGSHTFKLVNANGEAVYCKFHYKTDQGIKNLSVEDAARLSQEDPDYGIRDLFNAIATGKYPSWTFYIQVMTFNQAETFPFNPFDLTKVWPHKDYPLIPVGKLVLNRNPVNYFAEVEQIAFDPSNMPPGIEASPDKMLQGRLFAYPDTHRHRLGPNYLHIPVNCPYRARVANYQRDGPMCMQDNQGGAPNYYPNSFGAPEQQPSALEHSIQYSGEVRRFNTANDDNVTQVRAFYVNVLNEEQRKRLCENIAGHLKDAQIFIQKKAVKNFTEVHPDYGSHIQALLDKYNAEKPKNAIHTFVQSGSHLAAREKANL.

Ala2 is subject to N-acetylalanine. A Phosphoserine modification is found at Ser9. Catalysis depends on residues His75 and Asn148. His194, Ser201, Arg203, and Asn213 together coordinate NADP(+). The residue at position 221 (Lys221) is an N6-succinyllysine. An N6-acetyllysine modification is found at Lys233. Residues Lys237, Trp303, His305, and Lys306 each contribute to the NADP(+) site. Lys306 is modified (N6-acetyllysine; alternate). Lys306 is subject to N6-succinyllysine; alternate. Tyr358 contributes to the heme binding site. A phosphoserine mark is found at Ser417 and Ser422. Lys480 carries the N6-acetyllysine; alternate modification. N6-succinyllysine; alternate is present on Lys480. At Lys499 the chain carries N6-acetyllysine. Thr511 is modified (phosphothreonine). Phosphoserine occurs at positions 515 and 517. The Microbody targeting signal; atypical motif lies at 524-527 (KANL).

This sequence belongs to the catalase family. As to quaternary structure, homotetramer. Interacts (via microbody targeting signal) with PEX5, monomeric form interacts with PEX5, leading to its translocation into peroxisomes. Heme serves as cofactor. Requires NADP(+) as cofactor.

Its subcellular location is the peroxisome matrix. The catalysed reaction is 2 H2O2 = O2 + 2 H2O. Catalyzes the degradation of hydrogen peroxide (H(2)O(2)) generated by peroxisomal oxidases to water and oxygen, thereby protecting cells from the toxic effects of hydrogen peroxide. Promotes growth of cells including T-cells, B-cells, myeloid leukemia cells, melanoma cells, mastocytoma cells and normal and transformed fibroblast cells. This Homo sapiens (Human) protein is Catalase (CAT).